Consider the following 129-residue polypeptide: Small ribosomal subunit protein uS11 (129 aa).

This sequence belongs to the universal ribosomal protein uS11 family. In terms of assembly, part of the 30S ribosomal subunit. Interacts with proteins S7 and S18. Binds to IF-3.

Its function is as follows. Located on the platform of the 30S subunit, it bridges several disparate RNA helices of the 16S rRNA. Forms part of the Shine-Dalgarno cleft in the 70S ribosome. This is Small ribosomal subunit protein uS11 from Haemophilus ducreyi (strain 35000HP / ATCC 700724).